Consider the following 178-residue polypeptide: Mediator of RNA polymerase II transcription subunit 28 (178 aa).

Residues 1-43 (MAASLGGMFAGQPPGPPPPPPGLPGQASLLQAAPGAPRPSNST) form a disordered region. A compositionally biased stretch (pro residues) spans 13–23 (PPGPPPPPPGL). Residues 109-145 (QVIKEDVSELRSELQRKDALVQKHLTKLRHWQQVLED) are a coiled coil.

The protein belongs to the Mediator complex subunit 28 family. Forms a ternary complex with NF2/merlin and GRB2. Binds to actin. Component of the Mediator complex, which is probably composed of MED1, MED4, MED6, MED7, MED8, MED9, MED10, MED11, MED12, MED13, MED13L, MED14, MED15, MED16, MED17, MED18, MED19, MED20, MED21, MED22, MED23, MED24, MED25, MED26, MED27, MED29, MED30, MED31, CCNC, CDK8 and CDC2L6/CDK11. The MED12, MED13, CCNC and CDK8 subunits form a distinct module termed the CDK8 module. Mediator containing the CDK8 module is less active than Mediator lacking this module in supporting transcriptional activation. Individual preparations of the Mediator complex lacking one or more distinct subunits have been variously termed ARC, CRSP, DRIP, PC2, SMCC and TRAP.

The protein localises to the nucleus. It localises to the cytoplasm. The protein resides in the membrane. May be part of a complex containing NF2/merlin that participates in cellular signaling to the actin cytoskeleton downstream of tyrosine kinase signaling pathways. Component of the Mediator complex, a coactivator involved in the regulated transcription of nearly all RNA polymerase II-dependent genes. Mediator functions as a bridge to convey information from gene-specific regulatory proteins to the basal RNA polymerase II transcription machinery. Mediator is recruited to promoters by direct interactions with regulatory proteins and serves as a scaffold for the assembly of a functional preinitiation complex with RNA polymerase II and the general transcription factors. The chain is Mediator of RNA polymerase II transcription subunit 28 (Med28) from Rattus norvegicus (Rat).